The sequence spans 537 residues: MARLLKAVTVCALAGIAHAFNYDQPYRGQYHFSPQKNWMNDPNGLLYHNGTYHLFFQYNPGGIEWGNISWGHATSEDLTHWEEQPVALLARGYGSDVTEMYFSGSAVADVNNTSGFGKDGKTPLVAMYTSYYPVAQTLPSGQTVQEDQQSQSIAYSLDDGLTWTTYDAANPVIPNPPQPYQAQYQNFRDPFVFWHDESQKWVVVTSIAELHKLAIYTSDNLKDWKLVSEFGPYNAQGGVWECPGLFKLPLDGGSSTKWVITSGLNPGGPPGTVGSGTQYFVGEFDGTTFTPDADTVYPGNSTANWMDWGPDFYAAAGYNGLSIKDHVHIGWMNNWQYGANIPTYPWRSAMAIPRHLALKTINNKTTLVQQPQEAWSSISSKHPLYSRTYSTFSEGSTNASTTGETFRVDLSFSATSKASTFAIALRASANFTEQTLAGYDFAKQQIFLDRTKSGDVSFDNTFASVYHGPLVPDSTSMVRLSIFVDRSSVEVFGGQGETSLTAQIFPSNDAVHARLVSTGGATEDVRVDVHNITSTWN.

The signal sequence occupies residues 1–19 (MARLLKAVTVCALAGIAHA). Asp-41 is a catalytic residue. N-linked (GlcNAc...) asparagine glycosylation is found at Asn-49, Asn-67, Asn-112, Asn-300, Asn-363, Asn-398, Asn-430, and Asn-531.

This sequence belongs to the glycosyl hydrolase 32 family.

The protein localises to the secreted. The catalysed reaction is Hydrolysis of terminal, non-reducing (2-&gt;1)- and (2-&gt;6)-linked beta-D-fructofuranose residues in fructans.. Exo-inulinase involved in utilization of the plant storage polymer inulin, consisting of fructooligosaccharides with a degree of polymerization (DP) value from 2 to 60. Splits off terminal fructose units successively from the non-reducing end of the inulin molecule, and also hydrolyze sucrose and raffinose. This is Extracellular exo-inulinase inuE (inuE) from Aspergillus niger (strain ATCC MYA-4892 / CBS 513.88 / FGSC A1513).